Reading from the N-terminus, the 571-residue chain is Proline--tRNA ligase (571 aa).

It belongs to the class-II aminoacyl-tRNA synthetase family. ProS type 1 subfamily. Homodimer.

Its subcellular location is the cytoplasm. The enzyme catalyses tRNA(Pro) + L-proline + ATP = L-prolyl-tRNA(Pro) + AMP + diphosphate. In terms of biological role, catalyzes the attachment of proline to tRNA(Pro) in a two-step reaction: proline is first activated by ATP to form Pro-AMP and then transferred to the acceptor end of tRNA(Pro). As ProRS can inadvertently accommodate and process non-cognate amino acids such as alanine and cysteine, to avoid such errors it has two additional distinct editing activities against alanine. One activity is designated as 'pretransfer' editing and involves the tRNA(Pro)-independent hydrolysis of activated Ala-AMP. The other activity is designated 'posttransfer' editing and involves deacylation of mischarged Ala-tRNA(Pro). The misacylated Cys-tRNA(Pro) is not edited by ProRS. The sequence is that of Proline--tRNA ligase from Shewanella frigidimarina (strain NCIMB 400).